The following is a 138-amino-acid chain: Large ribosomal subunit protein uL16c (138 aa).

The protein belongs to the universal ribosomal protein uL16 family. Part of the 50S ribosomal subunit.

The protein resides in the plastid. It localises to the chloroplast. This chain is Large ribosomal subunit protein uL16c, found in Phaeodactylum tricornutum (strain CCAP 1055/1).